A 324-amino-acid polypeptide reads, in one-letter code: Probable UDP-sugar transporter protein SLC35A4 (324 aa).

Residues M1–R18 are Cytoplasmic-facing. Residues W19 to L39 traverse the membrane as a helical segment. Topologically, residues C40–S52 are lumenal. Residues A53–W73 form a helical membrane-spanning segment. The Cytoplasmic portion of the chain corresponds to Q74 to Q85. The chain crosses the membrane as a helical span at residues A86–L106. At Q107 to Q142 the chain is on the lumenal side. A helical membrane pass occupies residues G143–V163. Topologically, residues P164–M180 are cytoplasmic. The helical transmembrane segment at P181–L201 threads the bilayer. Residues S202 to Q214 are Lumenal-facing. A helical membrane pass occupies residues L215–L235. The Cytoplasmic portion of the chain corresponds to H236–S250. The helical transmembrane segment at G251–M271 threads the bilayer. The Lumenal segment spans residues K272–S275. The helical transmembrane segment at S276–L298 threads the bilayer. At R299 to R324 the chain is on the cytoplasmic side.

It belongs to the nucleotide-sugar transporter family. SLC35A subfamily. Found in a complex with SLC35A2 and SLC35A3.

The protein resides in the golgi apparatus membrane. The enzyme catalyses CDP-L-ribitol(in) + CDP(out) = CDP-L-ribitol(out) + CDP(in). In terms of biological role, mediates the transport of CDP-ribitol. Does not exhibit CMP-sialic acid, UDP-galactose and UDP-N-acetylglucosamine transport activity. The sequence is that of Probable UDP-sugar transporter protein SLC35A4 from Pongo abelii (Sumatran orangutan).